Consider the following 536-residue polypeptide: Adenine deaminase (536 aa).

The tract at residues 1-24 (MTPSPHDLLHCGMNSQDRDETNGD) is disordered.

This sequence belongs to the metallo-dependent hydrolases superfamily. Adenine deaminase family. The cofactor is Mn(2+).

The catalysed reaction is adenine + H2O + H(+) = hypoxanthine + NH4(+). This is Adenine deaminase from Deinococcus radiodurans (strain ATCC 13939 / DSM 20539 / JCM 16871 / CCUG 27074 / LMG 4051 / NBRC 15346 / NCIMB 9279 / VKM B-1422 / R1).